Consider the following 1226-residue polypeptide: Methionine synthase (1226 aa).

Residues 7-327 enclose the Hcy-binding domain; sequence KVQIEKQLSE…EHIRQMALVV (321 aa). Zn(2+) contacts are provided by cysteine 249, cysteine 312, and cysteine 313. Positions 358–619 constitute a Pterin-binding domain; sequence FINVGERTNV…VPEDLREAVE (262 aa). The region spanning 652-746 is the B12-binding N-terminal domain; sequence SALEWRDWPV…FINASKEVGA (95 aa). Residues glutamate 696, 758-762, histidine 761, serine 806, threonine 810, and alanine 862 contribute to the methylcob(III)alamin site; that span reads GDVHD. The region spanning 748-883 is the B12-binding domain; the sequence is NGKILLATVK…SDELKPSFVE (136 aa). An AdoMet activation domain is found at 899–1226; that stretch reads KQPRTKPVTL…AEKWLGPNLN (328 aa). S-adenosyl-L-methionine-binding positions include aspartate 949, arginine 1137, and 1192–1193; that span reads YF.

Belongs to the vitamin-B12 dependent methionine synthase family. Methylcob(III)alamin serves as cofactor. Requires Zn(2+) as cofactor.

The enzyme catalyses (6S)-5-methyl-5,6,7,8-tetrahydrofolate + L-homocysteine = (6S)-5,6,7,8-tetrahydrofolate + L-methionine. It participates in amino-acid biosynthesis; L-methionine biosynthesis via de novo pathway; L-methionine from L-homocysteine (MetH route): step 1/1. Functionally, catalyzes the transfer of a methyl group from methyl-cobalamin to homocysteine, yielding enzyme-bound cob(I)alamin and methionine. Subsequently, remethylates the cofactor using methyltetrahydrofolate. The chain is Methionine synthase (metH) from Aliivibrio fischeri (strain ATCC 700601 / ES114) (Vibrio fischeri).